A 1951-amino-acid polypeptide reads, in one-letter code: Sodium channel protein type 3 subunit alpha (1951 aa).

Residues methionine 1–serine 128 lie on the Cytoplasmic side of the membrane. The disordered stretch occupies residues arginine 28–asparagine 60. Basic and acidic residues predominate over residues glutamate 46–alanine 57. The I repeat unit spans residues isoleucine 110–glutamine 455. The chain crosses the membrane as a helical span at residues leucine 129–threonine 146. Residues leucine 147 to aspartate 152 lie on the Extracellular side of the membrane. The helical transmembrane segment at tryptophan 153–leucine 174 threads the bilayer. Topologically, residues alanine 175 to aspartate 188 are cytoplasmic. A helical membrane pass occupies residues proline 189–phenylalanine 206. Over valine 207–serine 213 the chain is Extracellular. A glycan (N-linked (GlcNAc...) asparagine) is linked at asparagine 211. Residues alanine 214–threonine 235 form a helical membrane-spanning segment. At isoleucine 236 to aspartate 249 the chain is on the cytoplasmic side. A helical transmembrane segment spans residues valine 250–phenylalanine 269. Residues methionine 270 to phenylalanine 369 lie on the Extracellular side of the membrane. N-linked (GlcNAc...) asparagine glycosylation is found at asparagine 290, asparagine 296, asparagine 302, asparagine 307, and asparagine 339. The pore-forming intramembrane region spans serine 370–glutamate 386. Residues asparagine 387 to glycine 397 are Extracellular-facing. Residues lysine 398–alanine 424 form a helical membrane-spanning segment. Residues methionine 425–phenylalanine 712 are Cytoplasmic-facing. Residues serine 484, serine 485, and serine 486 each carry the phosphoserine modification. Disordered regions lie at residues serine 493–glutamate 529 and valine 587–arginine 633. The segment covering arginine 500–arginine 509 has biased composition (basic residues). Composition is skewed to basic and acidic residues over residues glutamate 510–glutamate 529 and aspartate 596–asparagine 622. The stretch at cysteine 693–glycine 965 is one II repeat. A helical transmembrane segment spans residues valine 713–methionine 730. The Extracellular portion of the chain corresponds to glutamate 731–glutamine 738. The chain crosses the membrane as a helical span at residues phenylalanine 739–isoleucine 763. Topologically, residues alanine 764–glutamate 773 are cytoplasmic. Residues glycine 774–alanine 793 traverse the membrane as a helical segment. Topologically, residues asparagine 794 to glycine 797 are extracellular. A helical transmembrane segment spans residues leucine 798–tryptophan 816. Topologically, residues proline 817–glycine 834 are cytoplasmic. Residues asparagine 835–phenylalanine 855 form a helical membrane-spanning segment. Residues glycine 856–phenylalanine 880 lie on the Extracellular side of the membrane. Residues cysteine 864 and cysteine 870 are joined by a disulfide bond. An intramembrane region (pore-forming) is located at residues phenylalanine 881–isoleucine 896. Residues glutamate 897 to glycine 907 lie on the Extracellular side of the membrane. The cysteines at positions 902 and 911 are disulfide-linked. A helical membrane pass occupies residues glutamine 908–leucine 934. Residues leucine 935–histidine 1156 lie on the Cytoplasmic side of the membrane. The disordered stretch occupies residues threonine 1068 to glutamate 1112. The stretch at lysine 1139–leucine 1450 is one III repeat. Residues asparagine 1157–glutamate 1177 traverse the membrane as a helical segment. Residues aspartate 1178–threonine 1189 lie on the Extracellular side of the membrane. A helical transmembrane segment spans residues methionine 1190–valine 1211. The Cytoplasmic segment spans residues alanine 1212 to threonine 1217. The chain crosses the membrane as a helical span at residues tyrosine 1218–leucine 1243. The Extracellular segment spans residues glycine 1244 to lysine 1252. A helical membrane pass occupies residues serine 1253 to glycine 1271. Residues methionine 1272–proline 1284 are Cytoplasmic-facing. The chain crosses the membrane as a helical span at residues serine 1285–leucine 1307. Over phenylalanine 1308 to asparagine 1353 the chain is Extracellular. An intrachain disulfide couples cysteine 1315 to cysteine 1335. N-linked (GlcNAc...) asparagine glycans are attached at residues asparagine 1317 and asparagine 1331. Residues valine 1354–tryptophan 1370 constitute an intramembrane region (pore-forming). Topologically, residues methionine 1371 to leucine 1393 are extracellular. A helical transmembrane segment spans residues tyrosine 1394–isoleucine 1419. Residues aspartate 1420–glutamine 1477 are Cytoplasmic-facing. The residue at position 1452 (serine 1452) is a Phosphoserine; by PKC. The stretch at isoleucine 1459–glutamine 1757 is one IV repeat. Residues valine 1478 to valine 1496 form a helical membrane-spanning segment. Over glutamate 1497 to tyrosine 1504 the chain is Extracellular. Residues methionine 1505–leucine 1528 traverse the membrane as a helical segment. At isoleucine 1529–isoleucine 1538 the chain is on the cytoplasmic side. The helical transmembrane segment at glycine 1539 to phenylalanine 1556 threads the bilayer. Residues leucine 1557–proline 1568 lie on the Extracellular side of the membrane. A helical transmembrane segment spans residues threonine 1569–glycine 1591. The Cytoplasmic portion of the chain corresponds to isoleucine 1592–proline 1604. Residues alanine 1605 to phenylalanine 1628 form a helical membrane-spanning segment. Over alanine 1629–methionine 1650 the chain is Extracellular. Positions isoleucine 1651–aspartate 1663 form an intramembrane region, pore-forming. Over glycine 1664–proline 1695 the chain is Extracellular. Residues serine 1696–isoleucine 1721 traverse the membrane as a helical segment. Over leucine 1722–lysine 1951 the chain is Cytoplasmic. Residues glutamate 1851–lysine 1880 form the IQ domain. Residues aspartate 1898 to lysine 1951 form a disordered region. Residues threonine 1925 to lysine 1951 show a composition bias toward basic and acidic residues.

The protein belongs to the sodium channel (TC 1.A.1.10) family. Nav1.3/SCN3A subfamily. In terms of assembly, heterooligomer of an alpha subunit, SCN3A, and 1 to 3 regulatory beta subunits including SCN1B and SCN2B; disulfide-linked with some beta subunits like SCN2B. Interacts with NEDD4L; could regulate expression of SCN3A at the plasma membrane through ubiquitination-regulated endocytosis. Interacts with the conotoxin GVIIJ. Interacts with the spider beta/delta-theraphotoxin-Pre1a. Interacts with the spider RTX-VII toxin (AC P0DL75). In terms of processing, may be ubiquitinated by NEDD4L; which would promote its endocytosis. Post-translationally, phosphorylation at Ser-1452 by PKC in a highly conserved cytoplasmic loop slows inactivation of the sodium channel and reduces peak sodium currents.

Its subcellular location is the cell membrane. It localises to the basal cell membrane. The catalysed reaction is Na(+)(in) = Na(+)(out). Pore-forming subunit of Nav1.3, a voltage-gated sodium (Nav) channel that directly mediates the depolarizing phase of action potentials in excitable membranes. Navs, also called VGSCs (voltage-gated sodium channels) or VDSCs (voltage-dependent sodium channels), operate by switching between closed and open conformations depending on the voltage difference across the membrane. In the open conformation they allow Na(+) ions to selectively pass through the pore, along their electrochemical gradient. The influx of Na+ ions provokes membrane depolarization, initiating the propagation of electrical signals throughout cells and tissues. In some secretory cell types, it also participates in cell excitability through membrane depolarization and regulates cells responsiveness to stimuli triggering secretion. For instance, it controls the release of serotonin/5-hydroxytryptamine by enterochromaffin cells and is required for both glucagon- and glucose-induced insulin secretion in pancreatic endocrine cells. This is Sodium channel protein type 3 subunit alpha from Rattus norvegicus (Rat).